A 442-amino-acid chain; its full sequence is tRNA modification GTPase MnmE (442 aa).

(6S)-5-formyl-5,6,7,8-tetrahydrofolate contacts are provided by arginine 21, glutamate 79, and lysine 118. Positions 214–367 (GFKIAIVGKP…LKEELQNYLN (154 aa)) constitute a TrmE-type G domain. Asparagine 224 contributes to the K(+) binding site. GTP contacts are provided by residues 224–229 (NVGKSS), 243–249 (SDIAGTT), and 268–271 (DTAG). Residue serine 228 coordinates Mg(2+). K(+)-binding residues include serine 243, isoleucine 245, and threonine 248. Threonine 249 contacts Mg(2+). Position 442 (lysine 442) interacts with (6S)-5-formyl-5,6,7,8-tetrahydrofolate.

It belongs to the TRAFAC class TrmE-Era-EngA-EngB-Septin-like GTPase superfamily. TrmE GTPase family. In terms of assembly, homodimer. Heterotetramer of two MnmE and two MnmG subunits. K(+) serves as cofactor.

It localises to the cytoplasm. Its function is as follows. Exhibits a very high intrinsic GTPase hydrolysis rate. Involved in the addition of a carboxymethylaminomethyl (cmnm) group at the wobble position (U34) of certain tRNAs, forming tRNA-cmnm(5)s(2)U34. The protein is tRNA modification GTPase MnmE of Campylobacter jejuni (strain RM1221).